A 397-amino-acid polypeptide reads, in one-letter code: Chorismate synthase (397 aa).

NADP(+)-binding residues include arginine 40 and arginine 46. FMN is bound by residues 129 to 131 (RAS), 257 to 258 (QA), glycine 302, 317 to 321 (KPIAT), and arginine 343.

Belongs to the chorismate synthase family. As to quaternary structure, homotetramer. It depends on FMNH2 as a cofactor.

It carries out the reaction 5-O-(1-carboxyvinyl)-3-phosphoshikimate = chorismate + phosphate. Its pathway is metabolic intermediate biosynthesis; chorismate biosynthesis; chorismate from D-erythrose 4-phosphate and phosphoenolpyruvate: step 7/7. Catalyzes the anti-1,4-elimination of the C-3 phosphate and the C-6 proR hydrogen from 5-enolpyruvylshikimate-3-phosphate (EPSP) to yield chorismate, which is the branch point compound that serves as the starting substrate for the three terminal pathways of aromatic amino acid biosynthesis. This reaction introduces a second double bond into the aromatic ring system. This Prosthecochloris aestuarii (strain DSM 271 / SK 413) protein is Chorismate synthase.